Here is a 225-residue protein sequence, read N- to C-terminus: NAD(P)H-quinone oxidoreductase subunit K, chloroplastic (225 aa).

[4Fe-4S] cluster-binding residues include C43, C44, C108, and C139.

The protein belongs to the complex I 20 kDa subunit family. NDH is composed of at least 16 different subunits, 5 of which are encoded in the nucleus. The cofactor is [4Fe-4S] cluster.

Its subcellular location is the plastid. It localises to the chloroplast thylakoid membrane. It carries out the reaction a plastoquinone + NADH + (n+1) H(+)(in) = a plastoquinol + NAD(+) + n H(+)(out). The catalysed reaction is a plastoquinone + NADPH + (n+1) H(+)(in) = a plastoquinol + NADP(+) + n H(+)(out). In terms of biological role, NDH shuttles electrons from NAD(P)H:plastoquinone, via FMN and iron-sulfur (Fe-S) centers, to quinones in the photosynthetic chain and possibly in a chloroplast respiratory chain. The immediate electron acceptor for the enzyme in this species is believed to be plastoquinone. Couples the redox reaction to proton translocation, and thus conserves the redox energy in a proton gradient. The chain is NAD(P)H-quinone oxidoreductase subunit K, chloroplastic from Amborella trichopoda.